The primary structure comprises 84 residues: Conophysin-R (84 aa).

7 cysteine pairs are disulfide-bonded: Cys6–Cys46, Cys9–Cys20, Cys14–Cys36, Cys21–Cys26, Cys53–Cys71, Cys65–Cys83, and Cys72–Cys77.

As to expression, expressed by the venom duct.

Its subcellular location is the secreted. In terms of biological role, targets vasopressin-oxytocin related receptors. No effect observed when injected into goldfish or into mice. This Conus radiatus (Rayed cone) protein is Conophysin-R.